The chain runs to 528 residues: Putative pumilio homolog 10 (528 aa).

Residues 188–528 (EGSGASYPDE…KIFSKTILKK (341 aa)) form the PUM-HD domain. Pumilio repeat units lie at residues 213-248 (EIYG…VIFL), 249-284 (EIID…MIVS), 285-323 (VLTS…ALVK), 325-360 (ALEP…FVVE), 361-396 (AATE…RLVA), 397-433 (EISR…LPFR), 434-465 (THCI…EIVR), and 466-503 (ELLS…RLVE).

The protein resides in the cytoplasm. Sequence-specific RNA-binding protein that regulates translation and mRNA stability by binding the 3'-UTR of target mRNAs. The protein is Putative pumilio homolog 10 (APUM10) of Arabidopsis thaliana (Mouse-ear cress).